The following is a 301-amino-acid chain: MSASIADNVAEAQLQAEVLTKALPHMQRYDDAIVVVKYGGHAMGNDELARHFAQDIVLLEQSGVNPVVVHGGGPQIGAMLEKLGIKSEFAAGLRITDKATIEIVEMVLAGSINKQIVGFINEAGGKAIGLCGKDGNMVRARKATRTIVDPQSHIEEVVDLGFVGEPDTVDTMVLDQILGRELIPVLAPVASAVDGGTYNVNADTFAGAIAGALGAKRLLLLTDVPGVLDKNKQLIPRLTIDECRALIADGTVSGGMIPKVETCIYALEKGVEGVVIMDGKLPHSVLLELLTDHGIGTLITR.

Substrate-binding positions include 72-73 (GG), R94, and N199.

Belongs to the acetylglutamate kinase family. ArgB subfamily.

It localises to the cytoplasm. It catalyses the reaction N-acetyl-L-glutamate + ATP = N-acetyl-L-glutamyl 5-phosphate + ADP. It functions in the pathway amino-acid biosynthesis; L-arginine biosynthesis; N(2)-acetyl-L-ornithine from L-glutamate: step 2/4. Its function is as follows. Catalyzes the ATP-dependent phosphorylation of N-acetyl-L-glutamate. In Azorhizobium caulinodans (strain ATCC 43989 / DSM 5975 / JCM 20966 / LMG 6465 / NBRC 14845 / NCIMB 13405 / ORS 571), this protein is Acetylglutamate kinase.